The primary structure comprises 37 residues: uncharacterized protein (37 aa).

The helical transmembrane segment at 17 to 37 (TFVLIVVLFILLIIVGAAFIC) threads the bilayer.

Belongs to the SscA family.

The protein resides in the membrane. This is an uncharacterized protein from Bacillus subtilis (strain 168).